Here is a 682-residue protein sequence, read N- to C-terminus: Polyadenylate-binding protein 5 (682 aa).

4 RRM domains span residues 59–136, 146–223, 239–316, and 342–419; these read SSLY…LSNR, GNVF…HFVR, TNVY…RAQK, and SNLY…LAQR. Residues 588–665 form the PABC domain; the sequence is TISKLASDLA…ALDVLRRSAD (78 aa). Ser-600 carries the post-translational modification Phosphoserine.

The protein belongs to the polyadenylate-binding protein type-1 family. Expressed predominantly in immature flowers but also at lower levels in mature flowers and siliques. Detected in tapetum, pollen, ovules and developing seeds. Also detected in primary inflorescences and immature siliques.

The protein localises to the cytoplasm. The protein resides in the nucleus. Binds the poly(A) tail of mRNA. Appears to be an important mediator of the multiple roles of the poly(A) tail in mRNA biogenesis, stability and translation. This Arabidopsis thaliana (Mouse-ear cress) protein is Polyadenylate-binding protein 5 (PAB5).